The primary structure comprises 512 residues: Cytochrome P450 76C1 (512 aa).

The chain crosses the membrane as a helical span at residues 3 to 23 (IISGQALLLLFCFILSCFLIF). Residue cysteine 450 participates in heme binding.

It belongs to the cytochrome P450 family. Heme is required as a cofactor.

The protein localises to the membrane. The polypeptide is Cytochrome P450 76C1 (CYP76C1) (Arabidopsis thaliana (Mouse-ear cress)).